The sequence spans 149 residues: Inner membrane protein YdcZ (149 aa).

At 1 to 4 the chain is on the periplasmic side; the sequence is MNQS. Residues 5-25 form a helical membrane-spanning segment; sequence LTLAFLIAAGIGLVVQNTLMV. Over 26 to 33 the chain is Cytoplasmic; it reads RITQTSST. The chain crosses the membrane as a helical span at residues 34–54; it reads ILIAMLLNSLVGIVLFVSILW. Over 55–70 the chain is Periplasmic; the sequence is FKQGMAGFGELVSSVR. A helical membrane pass occupies residues 71–91; the sequence is WWTLIPGLLGSFFVFASISGY. The Cytoplasmic segment spans residues 92–93; the sequence is QN. A helical transmembrane segment spans residues 94–114; it reads VGAATTIAVLVASQLIGGLML. Residues 115–123 lie on the Periplasmic side of the membrane; sequence DIFRSHGVP. Residues 124–144 traverse the membrane as a helical segment; that stretch reads LRALFGPICGAILLVVGAWLV. Topologically, residues 145-149 are cytoplasmic; the sequence is ARRSF.

The protein localises to the cell inner membrane. The protein is Inner membrane protein YdcZ (ydcZ) of Escherichia coli (strain K12).